A 132-amino-acid chain; its full sequence is Transmembrane protein 170B (132 aa).

The Extracellular portion of the chain corresponds to 1–37 (MKAEGGDHSMINLSVQQVLSLWAHGTVLRNLTEMWYW). Asparagine 12 carries an N-linked (GlcNAc...) asparagine glycan. The chain crosses the membrane as a helical span at residues 38 to 58 (IFLWALFSSLFVHGAAGVLMF). Over 59–68 (VMLQRHRQGR) the chain is Cytoplasmic. Residues 69-89 (VISVIAVSIGFLASVTGAMIT) form a helical membrane-spanning segment. Residues 90-104 (SAAVAGIYRVAGKNM) lie on the Extracellular side of the membrane. The chain crosses the membrane as a helical span at residues 105-125 (APLEALVWGVGQTVLTLIISF). Residues 126 to 132 (SRILATL) are Cytoplasmic-facing.

Belongs to the TMEM170 family. As to quaternary structure, interacts with CTNNB1. Expressed in normal breast tissues. Down-regulated in breast cancer cells (at protein level).

Its subcellular location is the cell membrane. Functionally, negatively regulates the canonical Wnt signaling in breast cancer cells. Exerts an inhibitory effect on breast cancer growth by inhibiting CTNNB1 stabilization and nucleus translocation, which reduces the activity of Wnt targets. This Homo sapiens (Human) protein is Transmembrane protein 170B (TMEM170B).